A 144-amino-acid chain; its full sequence is 3-hydroxyacyl-[acyl-carrier-protein] dehydratase FabZ (144 aa).

Histidine 51 is an active-site residue.

The protein belongs to the thioester dehydratase family. FabZ subfamily.

Its subcellular location is the cytoplasm. It carries out the reaction a (3R)-hydroxyacyl-[ACP] = a (2E)-enoyl-[ACP] + H2O. Involved in unsaturated fatty acids biosynthesis. Catalyzes the dehydration of short chain beta-hydroxyacyl-ACPs and long chain saturated and unsaturated beta-hydroxyacyl-ACPs. This chain is 3-hydroxyacyl-[acyl-carrier-protein] dehydratase FabZ, found in Clostridium botulinum (strain Langeland / NCTC 10281 / Type F).